Here is a 492-residue protein sequence, read N- to C-terminus: Dipeptide and tripeptide permease A (492 aa).

The Cytoplasmic segment spans residues 1-20 (MSTANKHPEAASLNAFKQPR). A helical transmembrane segment spans residues 21–43 (SFYLIFSIELWERFGYYGLQGIM). Residues 44–58 (AVYLVKMLGMSEAQS) lie on the Periplasmic side of the membrane. A helical membrane pass occupies residues 59-79 (ITLFASFSALVYGLIAVGGWL). Residues 80 to 88 (GDKVLGTKR) lie on the Cytoplasmic side of the membrane. Residues 89–109 (VIVLGTLVLALGYALVAWSGH) traverse the membrane as a helical segment. Residue Asp110 is a topological domain, periplasmic. The chain crosses the membrane as a helical span at residues 111 to 131 (IAMIYFGMATIAVGNGLFKAN). At 132–152 (PSSLLSTCYEKDDPRLDGAFT) the chain is on the cytoplasmic side. The chain crosses the membrane as a helical span at residues 153–173 (MYYMAINIGSFFSMLATPWLA). Topologically, residues 174–178 (AQFGW) are periplasmic. A helical membrane pass occupies residues 179–199 (STAFGLSFVGMLITLVNFMFF). The Cytoplasmic portion of the chain corresponds to 200-217 (RKWVKDHGSKPDFAPLNM). A helical membrane pass occupies residues 218–238 (GKLLVTLLGIAVMIAAATWLL). Residues 239 to 245 (HNQDIAR) are Periplasmic-facing. A helical transmembrane segment spans residues 246 to 266 (MVLGAVAVAIVVIFTKEALTL). The Cytoplasmic portion of the chain corresponds to 267–273 (KGAARRK). Residues 274–294 (MIVAFLLMLEAIVFFVLYMQM) form a helical membrane-spanning segment. Topologically, residues 295-319 (PTSLNFFAIRNVEHSLLGIAFQPEQ) are periplasmic. A helical transmembrane segment spans residues 320–340 (FQALNPFWIMIFSPLLAALYN). Residues 341–351 (KLGDRMPMPHK) are Cytoplasmic-facing. Residues 352-372 (FALGMVLCSAAFLVLPLGASL) traverse the membrane as a helical segment. Over 373-377 (ANKMG) the chain is Periplasmic. A helical transmembrane segment spans residues 378–398 (IVSVGWLVLSYALQSVGELMI). Residues 399–413 (SGLGLAMVAQLVPQR) are Cytoplasmic-facing. Residues 414–434 (LMGFIMGSWFLTTAGAAMVAG) form a helical membrane-spanning segment. The Periplasmic segment spans residues 435 to 458 (KVANLMAVPENITNPLLSLHVYGD). The chain crosses the membrane as a helical span at residues 459–479 (IFFKIGITTGVIAVLMILAAP). The Cytoplasmic segment spans residues 480 to 492 (LLNRMTQDEQPGV).

Belongs to the major facilitator superfamily. Proton-dependent oligopeptide transporter (POT/PTR) (TC 2.A.17) family. DtpA subfamily.

The protein resides in the cell inner membrane. Its function is as follows. Proton-dependent permease that transports di- and tripeptides. This is Dipeptide and tripeptide permease A from Erwinia pyrifoliae (strain DSM 12163 / CIP 106111 / Ep16/96).